A 734-amino-acid polypeptide reads, in one-letter code: Photosystem I P700 chlorophyll a apoprotein A2 (734 aa).

8 consecutive transmembrane segments (helical) span residues 46–69 (IFAS…FHVA), 135–158 (LYTG…LHLQ), 175–199 (LNHH…HVAI), 273–291 (IAHH…GHMY), 330–353 (IHFQ…QHMY), 369–395 (AALY…IFFI), 417–439 (AIKS…LYVH), and 517–535 (FLVH…LILV). Residues cysteine 559 and cysteine 568 each coordinate [4Fe-4S] cluster. The next 2 helical transmembrane spans lie at 575–596 (AFYL…YWHW) and 643–665 (LSVW…MFLI). Chlorophyll a-binding residues include histidine 654, methionine 662, and tyrosine 670. Phylloquinone is bound at residue tryptophan 671. Residues 707–727 (LVGLAHFSVGYIFTYAAFLIA) form a helical membrane-spanning segment.

The protein belongs to the PsaA/PsaB family. As to quaternary structure, the PsaA/B heterodimer binds the P700 chlorophyll special pair and subsequent electron acceptors. PSI consists of a core antenna complex that captures photons, and an electron transfer chain that converts photonic excitation into a charge separation. The eukaryotic PSI reaction center is composed of at least 11 subunits. It depends on P700 is a chlorophyll a/chlorophyll a' dimer, A0 is one or more chlorophyll a, A1 is one or both phylloquinones and FX is a shared 4Fe-4S iron-sulfur center. as a cofactor.

It is found in the plastid. Its subcellular location is the chloroplast thylakoid membrane. It catalyses the reaction reduced [plastocyanin] + hnu + oxidized [2Fe-2S]-[ferredoxin] = oxidized [plastocyanin] + reduced [2Fe-2S]-[ferredoxin]. Its function is as follows. PsaA and PsaB bind P700, the primary electron donor of photosystem I (PSI), as well as the electron acceptors A0, A1 and FX. PSI is a plastocyanin-ferredoxin oxidoreductase, converting photonic excitation into a charge separation, which transfers an electron from the donor P700 chlorophyll pair to the spectroscopically characterized acceptors A0, A1, FX, FA and FB in turn. Oxidized P700 is reduced on the lumenal side of the thylakoid membrane by plastocyanin. The polypeptide is Photosystem I P700 chlorophyll a apoprotein A2 (Illicium oligandrum (Star anise)).